Here is a 219-residue protein sequence, read N- to C-terminus: Membrin-12 (219 aa).

At A2 the chain carries N-acetylalanine. The Cytoplasmic portion of the chain corresponds to A2–T197. The helical; Anchor for type IV membrane protein transmembrane segment at W198–I215 threads the bilayer. Topologically, residues R216–R219 are vesicular.

The protein belongs to the GOSR2 family.

It localises to the golgi apparatus membrane. In terms of biological role, involved in transport of proteins from the cis/medial-Golgi to the trans-Golgi network. This Arabidopsis thaliana (Mouse-ear cress) protein is Membrin-12 (MEMB12).